We begin with the raw amino-acid sequence, 447 residues long: Probable arabinosyltransferase ARAD1 (447 aa).

The Cytoplasmic segment spans residues 1 to 6 (MARKSS). A helical; Signal-anchor for type II membrane protein transmembrane segment spans residues 7–29 (LLKRAAIAVVSVIAIYVILNASV). Over 30–447 (SRSLPSSSDL…TNQTGLITSI (418 aa)) the chain is Lumenal. Residues 32–41 (SLPSSSDLPR) show a composition bias toward low complexity. The tract at residues 32 to 52 (SLPSSSDLPRQLIREDDDDEG) is disordered. Asn-427, Asn-432, and Asn-439 each carry an N-linked (GlcNAc...) asparagine glycan.

This sequence belongs to the glycosyltransferase 47 family. In terms of assembly, homodimer and heterodimer with ARAD2. Expressed in root vasculature, cotyledons, leaves, stems, vascular tissue of sepals, petals and stamens, pollen grains, mature siliques and abscission region of seeds.

It localises to the golgi apparatus membrane. Its function is as follows. Probable arabinosyl transferase responsible for the polymerization of arabinose into the arabinan of arabinogalactan. May function as inverting enzyme using UDP-beta-L-arabinopyranoside. May be important for arabinan side chains of rhamnogalacturonan I (RG-I), a major component of pectins. Cell wall pectic arabinans are involved in thigmomorphogenesis response of inflorescence stems to mechanical stress. This Arabidopsis thaliana (Mouse-ear cress) protein is Probable arabinosyltransferase ARAD1 (ARAD1).